Here is a 434-residue protein sequence, read N- to C-terminus: MEVFKNVVCPFCGTLCDDIEVLVENNHVVGTRNACRIGNAKFMHFEGAIRHESPLMRENKKDDFKKVDYETATEETARLLVEAKLPLIYGWSSAECHAQQLGVLLAEKTKAIVDNTASVUHGPSLLAVQDVGYPVSTLGETKNRADVVLFWGSNPMHAHPRHMSRYSVFPRGFFRQRGKQDRQMIVVDPRKTDTAKLADIHLQVEPHKDYELVSALRAAAKGFNIEAEQVAGVPTETIYEAVDICKNAQFGSLFFAMGVTMSRGKHRIIDNAIQFVIDMNAYTKFVLTPMRGHYNVNGFNQVSTWVTGYPYGVDFSRGYPRYNPGETASNDVLQRGDTDMMINVASDAGAHFPQKAVQHMAKIPLVCIDPHETPSSVISNIVLPPAITGLEVSGTAYRMDGVPIELRKVIKAPEGMLSDAEIMKMLIKKVDEMK.

A non-standard amino acid (selenocysteine) is located at residue U120.

Belongs to the FwdB family. This enzyme is composed of six subunits FwdA, FwdC, FwdD, FwdE, FwdF and FwdG. It depends on W-bis(molybdopterin guanine dinucleotide) as a cofactor.

It catalyses the reaction N-formylmethanofuran + 2 oxidized [2Fe-2S]-[ferredoxin] + H2O = methanofuran + 2 reduced [2Fe-2S]-[ferredoxin] + CO2 + H(+). The protein operates within one-carbon metabolism; methanogenesis from CO(2); 5,10-methenyl-5,6,7,8-tetrahydromethanopterin from CO(2): step 1/3. Its function is as follows. Catalyzes the reversible oxidation of CO(2) and methanofuran (MFR) to N-formylmethanofuran (CHO-MFR). This enzyme is oxygen-labile. The sequence is that of Tungsten-containing formylmethanofuran dehydrogenase 2 subunit B (fwdB) from Methanococcus maripaludis (strain DSM 14266 / JCM 13030 / NBRC 101832 / S2 / LL).